The chain runs to 234 residues: 1-(5-phosphoribosyl)-5-[(5-phosphoribosylamino)methylideneamino] imidazole-4-carboxamide isomerase (234 aa).

D9 functions as the Proton acceptor in the catalytic mechanism. D131 serves as the catalytic Proton donor.

This sequence belongs to the HisA/HisF family.

The protein localises to the cytoplasm. The enzyme catalyses 1-(5-phospho-beta-D-ribosyl)-5-[(5-phospho-beta-D-ribosylamino)methylideneamino]imidazole-4-carboxamide = 5-[(5-phospho-1-deoxy-D-ribulos-1-ylimino)methylamino]-1-(5-phospho-beta-D-ribosyl)imidazole-4-carboxamide. Its pathway is amino-acid biosynthesis; L-histidine biosynthesis; L-histidine from 5-phospho-alpha-D-ribose 1-diphosphate: step 4/9. This chain is 1-(5-phosphoribosyl)-5-[(5-phosphoribosylamino)methylideneamino] imidazole-4-carboxamide isomerase, found in Staphylococcus saprophyticus subsp. saprophyticus (strain ATCC 15305 / DSM 20229 / NCIMB 8711 / NCTC 7292 / S-41).